A 110-amino-acid chain; its full sequence is MSHNVEKITDAKVFKEKVQEGSGPVIVDCSATWCGPCKAISPVFQRLSTSEEFKNAKFYEIDVDELSEVAAELGVRAMPTFMFFKDGQKVNEVVGANPPALEAAIKAHVA.

In terms of domain architecture, Thioredoxin spans 1–110 (MSHNVEKITD…LEAAIKAHVA (110 aa)). Catalysis depends on nucleophile residues Cys-34 and Cys-37. Cys-34 and Cys-37 form a disulfide bridge.

It belongs to the thioredoxin family.

In terms of biological role, participates in various redox reactions through the reversible oxidation of its active center dithiol to a disulfide and catalyzes dithiol-disulfide exchange reactions. In Aspergillus fumigatus (Neosartorya fumigata), this protein is Thioredoxin Asp f 29.